The primary structure comprises 611 residues: Threonine--tRNA ligase (611 aa).

Residues 1-145 (MRLLLIHSDH…TILPGEGAAA (145 aa)) are editing domain. Residues 195–487 (VHVDLMRAKE…TAAQEVPSFP (293 aa)) are catalytic. 3 residues coordinate Zn(2+): Cys287, His339, and His460.

This sequence belongs to the class-II aminoacyl-tRNA synthetase family. Homodimer. Zn(2+) is required as a cofactor.

The protein resides in the cytoplasm. The catalysed reaction is tRNA(Thr) + L-threonine + ATP = L-threonyl-tRNA(Thr) + AMP + diphosphate + H(+). Catalyzes the attachment of threonine to tRNA(Thr) in a two-step reaction: L-threonine is first activated by ATP to form Thr-AMP and then transferred to the acceptor end of tRNA(Thr). Also edits incorrectly charged L-seryl-tRNA(Thr). The polypeptide is Threonine--tRNA ligase (Methanoculleus marisnigri (strain ATCC 35101 / DSM 1498 / JR1)).